The sequence spans 93 residues: Consomatin G2 (93 aa).

An N-terminal signal peptide occupies residues 1-18 (MQTAYWVMLMMMVCITAP). The propeptide occupies 19-69 (LPEGGKPNSGIRGLVPNDLTPQHTLRSLISRRQTDVLLDATLLTTPAPEQR). C72 and C77 are joined by a disulfide. A D-tryptophan modification is found at W74. Positions 79 to 93 (WRPYPWRRRDLNGKR) are excised as a propeptide.

Belongs to the conotoxin C superfamily. Consomatin family. Expressed by the venom duct.

Its subcellular location is the secreted. Its function is as follows. Moderately activates human somatostatin receptors (SSTR) with a preferential activation of SSTR1 and SSTR4. In vivo, does not cause behavioral changes in mice within a few minutes of intracranial injection, but causes a progressive loss of movement thereafter. Four to five hours after injection, mice recover, even with the highest dose tested. Shows antinociception and antihyperalgesia activities in two mouse models of acute pain, most probably by acting outside the central nervous system. The protein is Consomatin G2 of Conus geographus (Geography cone).